The following is a 137-amino-acid chain: Large ribosomal subunit protein uL16 (137 aa).

Belongs to the universal ribosomal protein uL16 family. As to quaternary structure, part of the 50S ribosomal subunit.

Binds 23S rRNA and is also seen to make contacts with the A and possibly P site tRNAs. This chain is Large ribosomal subunit protein uL16, found in Methylorubrum extorquens (strain CM4 / NCIMB 13688) (Methylobacterium extorquens).